Consider the following 508-residue polypeptide: Photosystem II CP47 reaction center protein (508 aa).

Transmembrane regions (helical) follow at residues 21–36, 101–115, 140–156, 203–218, 237–252, and 457–472; these read SVHLMHTALVSGWAGS, IILSGLLFLAAIWHW, GVHLFLSGALCLAFGVF, IAAGLLGLIAGGFHVL, VLSSSIAAVFWSAFVV, and SFALIFFFGHIWHGAR.

The protein belongs to the PsbB/PsbC family. PsbB subfamily. As to quaternary structure, PSII is composed of 1 copy each of membrane proteins PsbA, PsbB, PsbC, PsbD, PsbE, PsbF, PsbH, PsbI, PsbJ, PsbK, PsbL, PsbM, PsbT, PsbY, PsbZ, Psb30/Ycf12, at least 3 peripheral proteins of the oxygen-evolving complex and a large number of cofactors. It forms dimeric complexes. Binds multiple chlorophylls. PSII binds additional chlorophylls, carotenoids and specific lipids. serves as cofactor.

The protein localises to the plastid. Its subcellular location is the chloroplast thylakoid membrane. Functionally, one of the components of the core complex of photosystem II (PSII). It binds chlorophyll and helps catalyze the primary light-induced photochemical processes of PSII. PSII is a light-driven water:plastoquinone oxidoreductase, using light energy to abstract electrons from H(2)O, generating O(2) and a proton gradient subsequently used for ATP formation. The polypeptide is Photosystem II CP47 reaction center protein (Euglena gracilis).